The primary structure comprises 1819 residues: Protein REDUCED CHLOROPLAST COVERAGE 2 (1819 aa).

Over residues 1 to 17 (MAPKAGKTKPHKSKGEK) the composition is skewed to basic residues. Disordered regions lie at residues 1 to 23 (MAPK…KEEK), 128 to 180 (KPPV…GACE), 595 to 619 (QASS…GLGK), and 634 to 664 (KANK…LEKQ). 2 stretches are compositionally biased toward basic and acidic residues: residues 135-145 (LPKDSEKKESG) and 600-612 (SESK…KPEP). Residues 329–603 (EDETWGGDGG…NQASSKSESK (275 aa)) enclose the Clu domain. A coiled-coil region spans residues 649–680 (TDNTSETEDQKELEKQNEEIEKMWKELVTETA). TPR repeat units follow at residues 892–925 (GRTL…LVAV), 934–967 (AGAY…NERE), 976–1009 (MKSY…LHLT), 1018–1051 (AATY…NQRL), and 1060–1093 (AASY…LQAK). Disordered stretches follow at residues 1152 to 1360 (SGIK…PMLS), 1413 to 1456 (KVNA…SPKE), 1468 to 1513 (KAFP…SESV), 1527 to 1573 (LKTV…ASAP), 1616 to 1670 (STPH…PRIM), and 1731 to 1809 (LVSE…DYSD). Composition is skewed to basic and acidic residues over residues 1199-1224 (SSDK…EQSK) and 1230-1239 (KLVKPEATVH). Serine 1244 is subject to Phosphoserine. The span at 1269–1313 (KLNTNFMNVTQQPSRSRGKSTNFTSPRTSSNELSISVAGSTSSPA) shows a compositional bias: polar residues. Position 1320 is a phosphoserine (serine 1320). Residues 1343 to 1354 (LASSACTEQINK) show a composition bias toward polar residues. Polar residues-rich tracts occupy residues 1496-1511 (CLLN…NGSE) and 1536-1546 (NLPNGDSSPKS). Residues 1551 to 1566 (DGEKQDACEAQKEMSK) are compositionally biased toward basic and acidic residues. Residues 1650–1665 (SFPNSTESNGEANQFN) are compositionally biased toward polar residues. Over residues 1742-1759 (SEEKSGSEEESNNDKNAG) the composition is skewed to basic and acidic residues. The span at 1767-1778 (QETTDTPENGHS) shows a compositional bias: polar residues. Residues 1785 to 1800 (TTSHETCDEKNGERQG) show a composition bias toward basic and acidic residues.

As to expression, expressed in the non-epidermal tissues of the true leaves. Not detected in the vegetative shoot meristem and leaf primordia.

Its subcellular location is the nucleus. The protein localises to the cytoplasm. It is found in the cytosol. Its function is as follows. Negatively regulates meristematic tissue proliferation by integrating developmental signals with carbon source availability. May act as the scaffold of a protein complex, which sequesters key factors that are required for the G2 to M transition in meristematic tissues. Together with REC2, REC3 and FMT/CLU, contributes to the establishment of the cellular volume devoted to the chloroplast compartment. This Arabidopsis thaliana (Mouse-ear cress) protein is Protein REDUCED CHLOROPLAST COVERAGE 2.